Here is a 307-residue protein sequence, read N- to C-terminus: NAD kinase (307 aa).

Asp78 acts as the Proton acceptor in catalysis. NAD(+) is bound by residues 78 to 79, His83, 154 to 155, Arg165, Arg182, Asp184, and Gln255; these read DG and NE.

The protein belongs to the NAD kinase family. The cofactor is a divalent metal cation.

The protein resides in the cytoplasm. The enzyme catalyses NAD(+) + ATP = ADP + NADP(+) + H(+). Involved in the regulation of the intracellular balance of NAD and NADP, and is a key enzyme in the biosynthesis of NADP. Catalyzes specifically the phosphorylation on 2'-hydroxyl of the adenosine moiety of NAD to yield NADP. The sequence is that of NAD kinase from Halorhodospira halophila (strain DSM 244 / SL1) (Ectothiorhodospira halophila (strain DSM 244 / SL1)).